Consider the following 817-residue polypeptide: Phospholipase D alpha 2 (817 aa).

Positions 1 to 130 (MAHLLLHGTL…LSGEAIERRL (130 aa)) constitute a C2 domain. Residue Asp-192 coordinates Ca(2+). In terms of domain architecture, PLD phosphodiesterase 1 spans 333 to 372 (YMITHHQKTVIVDHDMPVPRGGGSRRIVSFVGGLDLCDGR). Residues His-338, Lys-340, and Asp-345 contribute to the active site. His-338 lines the a 1,2-diacyl-sn-glycero-3-phosphate pocket. Ca(2+) is bound by residues His-378 and His-412. The a 1,2-diacyl-sn-glycero-3-phosphate site is built by Gln-529 and His-668. Residues 663–690 (FMIYVHSKMMIVDDEYIIVGSANINQRS) form the PLD phosphodiesterase 2 domain. Active-site residues include His-668, Lys-670, and Asp-675. Glu-730 is a binding site for Ca(2+).

Belongs to the phospholipase D family. C2-PLD subfamily. Requires Ca(2+) as cofactor.

It catalyses the reaction a 1,2-diacyl-sn-glycero-3-phosphocholine + H2O = a 1,2-diacyl-sn-glycero-3-phosphate + choline + H(+). Hydrolyzes glycerol-phospholipids at the terminal phosphodiesteric bond. Plays an important role in various cellular processes. In Oryza sativa subsp. japonica (Rice), this protein is Phospholipase D alpha 2 (PLD2).